A 154-amino-acid polypeptide reads, in one-letter code: 3-hydroxyacyl-[acyl-carrier-protein] dehydratase FabZ (154 aa).

The active site involves H54.

It belongs to the thioester dehydratase family. FabZ subfamily.

The protein resides in the cytoplasm. The catalysed reaction is a (3R)-hydroxyacyl-[ACP] = a (2E)-enoyl-[ACP] + H2O. Involved in unsaturated fatty acids biosynthesis. Catalyzes the dehydration of short chain beta-hydroxyacyl-ACPs and long chain saturated and unsaturated beta-hydroxyacyl-ACPs. The sequence is that of 3-hydroxyacyl-[acyl-carrier-protein] dehydratase FabZ from Chlamydia caviae (strain ATCC VR-813 / DSM 19441 / 03DC25 / GPIC) (Chlamydophila caviae).